Reading from the N-terminus, the 377-residue chain is Erythronate-4-phosphate dehydrogenase (377 aa).

The substrate site is built by Ser-45 and Thr-67. Residues 127-128, Asp-147, and Thr-176 contribute to the NAD(+) site; that span reads QV. Residue Arg-209 is part of the active site. Asp-233 contributes to the NAD(+) binding site. Glu-238 is a catalytic residue. His-255 functions as the Proton donor in the catalytic mechanism. Residue Gly-258 coordinates NAD(+). Tyr-259 lines the substrate pocket.

This sequence belongs to the D-isomer specific 2-hydroxyacid dehydrogenase family. PdxB subfamily. As to quaternary structure, homodimer.

It localises to the cytoplasm. It catalyses the reaction 4-phospho-D-erythronate + NAD(+) = (R)-3-hydroxy-2-oxo-4-phosphooxybutanoate + NADH + H(+). Its pathway is cofactor biosynthesis; pyridoxine 5'-phosphate biosynthesis; pyridoxine 5'-phosphate from D-erythrose 4-phosphate: step 2/5. Catalyzes the oxidation of erythronate-4-phosphate to 3-hydroxy-2-oxo-4-phosphonooxybutanoate. This chain is Erythronate-4-phosphate dehydrogenase, found in Vibrio vulnificus (strain YJ016).